The chain runs to 339 residues: Ectoine/5-hydroxyectoine-binding periplasmic protein UehA (339 aa).

The signal sequence occupies residues 1-20 (MAQSITFTFGAVAAAGIALA). Positions 36, 171, 211, 215, and 236 each coordinate L-ectoine. A disulfide bridge connects residues cysteine 162 and cysteine 303.

The protein belongs to the bacterial solute-binding protein 7 family. In terms of assembly, monomer. The complex comprises the extracytoplasmic solute receptor protein UehA, and the two transmembrane proteins UehB and UehC.

It is found in the periplasm. Functionally, part of the tripartite ATP-independent periplasmic (TRAP) transport system UehABC, which imports both ectoine and 5-hydroxyectoine as nutrients, and not as osmoprotectants. UehA binds both ectoine and 5-hydroxyectoine with high specificity and affinity. The polypeptide is Ectoine/5-hydroxyectoine-binding periplasmic protein UehA (Ruegeria pomeroyi (strain ATCC 700808 / DSM 15171 / DSS-3) (Silicibacter pomeroyi)).